Consider the following 414-residue polypeptide: Histidine--tRNA ligase (414 aa).

This sequence belongs to the class-II aminoacyl-tRNA synthetase family. Homodimer.

Its subcellular location is the cytoplasm. It catalyses the reaction tRNA(His) + L-histidine + ATP = L-histidyl-tRNA(His) + AMP + diphosphate + H(+). The chain is Histidine--tRNA ligase from Anaeromyxobacter dehalogenans (strain 2CP-1 / ATCC BAA-258).